The chain runs to 259 residues: Snake venom serine protease homolog rhinocerase 2 (259 aa).

The signal sequence occupies residues 1–17; the sequence is VLIRVLANLLLLQLSYA. A propeptide spanning residues 18-23 is cleaved from the precursor; it reads QESSEL. The Peptidase S1 domain maps to 24-250; the sequence is VIGGDECDIN…YTDWIEGIIA (227 aa). Cystine bridges form between Cys-30–Cys-164, Cys-51–Cys-67, Cys-99–Cys-257, Cys-143–Cys-211, Cys-175–Cys-190, and Cys-201–Cys-226. N-linked (GlcNAc...) asparagine glycosylation occurs at Asn-252.

This sequence belongs to the peptidase S1 family. Snake venom subfamily. In terms of tissue distribution, expressed by the venom gland.

Its subcellular location is the secreted. Snake venom serine protease homolog that may act in the hemostasis system of the prey. This is Snake venom serine protease homolog rhinocerase 2 from Bitis rhinoceros (West African gaboon viper).